We begin with the raw amino-acid sequence, 1163 residues long: MNSEEMNHVNPFEISDNNDVSIPSQRYPFANDPADSVFCADDFLQSYGEFNMDNFGESEPFIDASGAINAAIGVTGTVLGFLGVPFAGALTTFYQKLFGFLFPNNNTKQWEEFMKQVEALIDEKISDAVRNKAISELQGLVNNITLYTEALEEWLENKENPAVRDRVLQRWRILDGFFEQQMPSFAVKGFEVLLLVVYTQAANLHLLSLRDAYIYGAEWGLTPTNIDQNHTRLLRHSAEYTDHCVNWYNTGLKQLENSDAKSWFQYNRFRREMTLSVLDVIALFPAYDVKMYPIPTNFQLTREVYTDVIGKIGRNDSDHWYSANAPSFSNLESTLIRTPHVVDYIKKLKIFYATVDYYGIYGRSGKWVGHIITSATSANTTETRNYGTIVNHDSVELNFEGKNIYKTGSLPQGVPPYQIGYVTPIYFITRAVNFFTVSGSKTSVEKYYSKKDRYYSEGLPEEQGVFSTEQLPPNSIAEPEHIAYSHRLCHVTFISVSNGNKYSKDLPLFSWTHSSVDFDNYVYPTKITQLPATKGYNVSIVKEPGFIGGDIGKNNGQILGKYKVNVEDVSQKYRFRVRYATETEGELGIKIDGRTVNLYQYKKTKAPGDPLTYKAFDYLSFSTPVKFNNASSTIELFLQNKTSGTFYLAGIEIIPVKSNYEEELTLEEAKKAVSSLFTDARNALKIDVTDYQIDQAANLVECISGDLYAKEKIVLLRAVKFAKQLSQSQNLLSDPEFNNVNRENSWTASTSVAIIEGDPLYKGRAVQLSSARDENFPTYLYQKIDESTLKPYTRYQLRGFVEGSENLDVYLIRYGAAHVRMNVPYNLEIIDTSSPVNPCEEVDGLSHRSCNVFDRCKQSISVAPDANTGPDQIDGDPHAFSFHIDTGTVDSTENLGIWVAFKISELDGSAIFGNLELIEVGPLSGEALAQVQRKEEKWKQVLAKKRETTAQTVCSGEASQLTNSSQILKIRNYDLIQNFRIFSLRNTLSIKFKIYTITNYPYSRLNYDLFMELENRIQNASLYMTSNILQNGGFKSDVTSWETTANAEVQQIDGASVLVLSNWNASVAQSVNVQNDHGYVLRVTAKKEGIGNGYVTILDCANHIDTLTFSACRSDSDTSSNELTAYVTKTLEIFPDTEQIRIEIGETEGMFYVESVELIRMEN.

Belongs to the delta endotoxin family.

In terms of biological role, promotes colloidosmotic lysis by binding to the midgut epithelial cells of insects. The sequence is that of Pesticidal crystal protein Cry26Aa (cry26Aa) from Bacillus thuringiensis subsp. finitimus.